Consider the following 397-residue polypeptide: Acetate kinase (397 aa).

Asparagine 8 contributes to the Mg(2+) binding site. Lysine 15 serves as a coordination point for ATP. Arginine 89 lines the substrate pocket. Aspartate 146 acts as the Proton donor/acceptor in catalysis. Residues 206 to 210 (HLGNG), 281 to 283 (DLR), and 329 to 333 (GVGEN) each bind ATP. Position 382 (glutamate 382) interacts with Mg(2+).

It belongs to the acetokinase family. Homodimer. Mg(2+) is required as a cofactor. It depends on Mn(2+) as a cofactor.

Its subcellular location is the cytoplasm. The catalysed reaction is acetate + ATP = acetyl phosphate + ADP. Its pathway is metabolic intermediate biosynthesis; acetyl-CoA biosynthesis; acetyl-CoA from acetate: step 1/2. Its function is as follows. Catalyzes the formation of acetyl phosphate from acetate and ATP. Can also catalyze the reverse reaction. This is Acetate kinase from Bacillus mycoides (strain KBAB4) (Bacillus weihenstephanensis).